The chain runs to 135 residues: Agouti-signaling protein (135 aa).

A signal peptide spans 1-22; it reads MNILRLLLATLLVCLCLLTAYS. Residue Asn39 is glycosylated (N-linked (GlcNAc...) asparagine). A disordered region spans residues 56-101; it reads NKKSKKISRKEAEKKRSSKKKASMKNVAQPRRPRPPPPAPCVATRD. 5 disulfides stabilise this stretch: Cys96–Cys111, Cys103–Cys117, Cys110–Cys128, Cys114–Cys135, and Cys119–Cys126. The Agouti domain occupies 96 to 135; it reads CVATRDSCKPPAPACCDPCASCQCRFFRSSCSCRVLNPTC.

It localises to the secreted. Involved in the regulation of melanogenesis. The binding of ASP to MC1R precludes alpha-MSH initiated signaling and thus blocks production of cAMP, leading to a down-regulation of eumelanogenesis (brown/black pigment) and thus increasing synthesis of pheomelanin (yellow/red pigment). In Felis catus (Cat), this protein is Agouti-signaling protein (ASIP).